The following is a 181-amino-acid chain: Putative J domain-containing protein R266 (181 aa).

The 65-residue stretch at 6–70 (NYYQILDVDN…LKRLNYDSYL (65 aa)) folds into the J domain.

The sequence is that of Putative J domain-containing protein R266 from Acanthamoeba polyphaga (Amoeba).